Consider the following 147-residue polypeptide: Lectin-like protein BA14k (147 aa).

The N-terminal stretch at 1 to 26 (MNSFRKTCAGALALIFGATSIVPTVA) is a signal peptide. Residues 80-100 (GWWYPLAAFGAGAIIGGAISQ) form a helical membrane-spanning segment.

Belongs to the BA14k family.

The protein resides in the cell membrane. Functionally, has immunoglobulin-binding and hemagglutination properties, and can bind to mannose. Essential for virulence. May be involved in LPS biosynthesis or polysaccharide transport. In Brucella abortus (strain S19), this protein is Lectin-like protein BA14k.